Reading from the N-terminus, the 158-residue chain is NAD(P)H-quinone oxidoreductase subunit J, chloroplastic (158 aa).

The protein belongs to the complex I 30 kDa subunit family. In terms of assembly, NDH is composed of at least 16 different subunits, 5 of which are encoded in the nucleus.

The protein localises to the plastid. It is found in the chloroplast thylakoid membrane. The enzyme catalyses a plastoquinone + NADH + (n+1) H(+)(in) = a plastoquinol + NAD(+) + n H(+)(out). The catalysed reaction is a plastoquinone + NADPH + (n+1) H(+)(in) = a plastoquinol + NADP(+) + n H(+)(out). Functionally, NDH shuttles electrons from NAD(P)H:plastoquinone, via FMN and iron-sulfur (Fe-S) centers, to quinones in the photosynthetic chain and possibly in a chloroplast respiratory chain. The immediate electron acceptor for the enzyme in this species is believed to be plastoquinone. Couples the redox reaction to proton translocation, and thus conserves the redox energy in a proton gradient. In Crucihimalaya wallichii (Rock-cress), this protein is NAD(P)H-quinone oxidoreductase subunit J, chloroplastic.